We begin with the raw amino-acid sequence, 1597 residues long: Collagen alpha-1(XVII) chain (1597 aa).

2 disordered regions span residues 1 to 155 (MDVT…PSTR) and 168 to 188 (GSRS…PIPK). Over 1 to 468 (MDVTKKNKRD…CGSCCSWWKW (468 aa)) the chain is Cytoplasmic. The nonhelical region (NC16A) stretch occupies residues 1-567 (MDVTKKNKRD…AEQENGNLRG (567 aa)). Positions 9-19 (RDGSEVTERII) are enriched in basic and acidic residues. Composition is skewed to polar residues over residues 58–96 (THGS…SPGS), 111–120 (EGSSSGNSSP), and 170–184 (RSAS…SNTL). Residues 146-231 (RLQSASPSTR…WSSTLPAGSS (86 aa)) form a necessary for interaction with DST and for the recruitment of DST to hemidesmosome region. A helical; Signal-anchor for type II membrane protein membrane pass occupies residues 469–489 (LLGLLLTWLLLLGLLFGLIAL). Topologically, residues 490–1597 (AEEVRALKAR…KGGSWRLTSY (1108 aa)) are extracellular. Disordered regions lie at residues 562–857 (NGNL…SSSS), 907–927 (LRGP…FRVR), 970–1041 (LETY…ISSS), 1289–1316 (TAGV…VSGA), and 1344–1394 (FIVG…SSMG). The segment at 568–1572 (SPGPKGDMGS…ELPLEEQPLA (1005 aa)) is triple-helical region. The segment covering 604–632 (PKGQKGSVGEPGMEGPMGQRGREGPMGPR) has biased composition (low complexity). A compositionally biased stretch (gly residues) spans 665 to 674 (GPKGSGGSPG). 2 stretches are compositionally biased toward low complexity: residues 730–748 (PGAV…AGPD) and 774–796 (DPGK…PGRP). Positions 820–838 (PGPPGPPGAMGPPGPPGAP) are enriched in pro residues. Positions 847–857 (AGESFMGSSSS) are enriched in low complexity. Composition is skewed to pro residues over residues 910–922 (PPGP…PPDL), 977–986 (PPGPPGPPGP), 1023–1035 (PGPP…PGPP), 1296–1310 (PGPP…PRGP), and 1348–1357 (PPGPPGPQGP). Over residues 1377-1393 (SSHSASVSRGSSYSSSM) the composition is skewed to low complexity. N-linked (GlcNAc...) asparagine glycosylation is present at Asn1493. The segment at 1531 to 1566 (GHPALEGTREKKETKVTKSMRGGEREASPSSHELPL) is disordered. Positions 1537–1557 (GTREKKETKVTKSMRGGEREA) are enriched in basic and acidic residues. The segment at 1573 to 1597 (SVLAMAYGVHVKISPKGGSWRLTSY) is nonhelical region (NC1).

In terms of assembly, homotrimers of alpha 1(XVII)chains. Interacts (via cytoplasmic region) with ITGB4 (via cytoplasmic region). Interacts (via cytoplasmic region) with DST (via N-terminus). Interacts (via N-terminus) with PLEC. Interacts (via cytoplasmic region) with DSP. The intracellular/endo domain is disulfide-linked. Post-translationally, prolines at the third position of the tripeptide repeating unit (G-X-Y) are hydroxylated in some or all of the chains. In terms of processing, the ectodomain is shedded from the surface of keratinocytes resulting in a 120-kDa soluble form, also named as 120 kDa linear IgA disease antigen homolog. The shedding is mediated by membrane-bound metalloproteases. Upper lamina lucidalhemidesmosome.

It localises to the cell junction. The protein resides in the hemidesmosome. The protein localises to the membrane. Its subcellular location is the secreted. It is found in the extracellular space. It localises to the extracellular matrix. The protein resides in the basement membrane. In terms of biological role, the 120 kDa linear IgA disease antigen homolog is an anchoring filament component involved in dermal-epidermal cohesion. In Canis lupus familiaris (Dog), this protein is Collagen alpha-1(XVII) chain (COL17A1).